A 360-amino-acid polypeptide reads, in one-letter code: Tubulin-like protein CetZ2 (360 aa).

GTP is bound by residues 10–14, 65–66, 106–108, Glu138, Asn165, and Asn183; these read QAGGK, GG, and GSG. Residues 334–354 show a composition bias toward basic and acidic residues; the sequence is EAIDKAETEPREDPKGMWHSD. The segment at 334 to 360 is disordered; sequence EAIDKAETEPREDPKGMWHSDDLDDLL.

The protein belongs to the CetZ family.

It localises to the cytoplasm. Involved in cell shape control. This chain is Tubulin-like protein CetZ2, found in Haloferax volcanii (strain ATCC 29605 / DSM 3757 / JCM 8879 / NBRC 14742 / NCIMB 2012 / VKM B-1768 / DS2) (Halobacterium volcanii).